A 271-amino-acid chain; its full sequence is Formamidopyrimidine-DNA glycosylase (271 aa).

Pro2 functions as the Schiff-base intermediate with DNA in the catalytic mechanism. Glu3 (proton donor) is an active-site residue. The active-site Proton donor; for beta-elimination activity is the Lys57. The DNA site is built by His90, Arg109, and Lys151. The FPG-type zinc finger occupies 236–270; that stretch reads HVYGRGGETCTSCGNLLSEIRLGQRTTVFCGICQT. Catalysis depends on Arg260, which acts as the Proton donor; for delta-elimination activity.

This sequence belongs to the FPG family. Monomer. It depends on Zn(2+) as a cofactor.

It carries out the reaction Hydrolysis of DNA containing ring-opened 7-methylguanine residues, releasing 2,6-diamino-4-hydroxy-5-(N-methyl)formamidopyrimidine.. The catalysed reaction is 2'-deoxyribonucleotide-(2'-deoxyribose 5'-phosphate)-2'-deoxyribonucleotide-DNA = a 3'-end 2'-deoxyribonucleotide-(2,3-dehydro-2,3-deoxyribose 5'-phosphate)-DNA + a 5'-end 5'-phospho-2'-deoxyribonucleoside-DNA + H(+). Involved in base excision repair of DNA damaged by oxidation or by mutagenic agents. Acts as a DNA glycosylase that recognizes and removes damaged bases. Has a preference for oxidized purines, such as 7,8-dihydro-8-oxoguanine (8-oxoG). Has AP (apurinic/apyrimidinic) lyase activity and introduces nicks in the DNA strand. Cleaves the DNA backbone by beta-delta elimination to generate a single-strand break at the site of the removed base with both 3'- and 5'-phosphates. In Shewanella sp. (strain W3-18-1), this protein is Formamidopyrimidine-DNA glycosylase.